The primary structure comprises 1061 residues: Protein pid-5 (1061 aa).

It belongs to the peptidase M24B family. As to quaternary structure, may interact with pid-2, app-1 and prmt-5.

Its subcellular location is the cytoplasm. The protein resides in the perinuclear region. It localises to the P-body. In terms of biological role, together with pid-4, it is involved in gene silencing mediated by a class of 21 nucleotide PIWI-interacting RNAs (piRNAs) that possess a uracil residue at the 5'-end (also called 21U-RNAs) and guide the Piwi protein prg-1 to its DNA targets for silencing. Together with pid-4, it is required for the biogenesis of secondary and tertiary 22G-siRNAs. Specifically, promotes the production of 22G-siRNAs from the 5' end of target mRNAs. Together with pid-4, plays a role in small RNA-directed transgenerational epigenetic inheritance (also called RNAe) over several generations and germline immortality. Together with pid-4, plays a role in the formation of liquid-like condensates in the cytoplasm called Z granules. The protein is Protein pid-5 of Caenorhabditis elegans.